Here is a 294-residue protein sequence, read N- to C-terminus: Golgi to ER traffic protein 2 (294 aa).

Residues 1 to 104 form a disordered region; sequence MSSELSETEK…QATSPQETID (104 aa). Residues 1–166 are Cytoplasmic-facing; sequence MSSELSETEK…LDYNNYLINN (166 aa). Residues 12–21 show a composition bias toward basic residues; that stretch reads KLIRERRQKK. Residues 34-65 are compositionally biased toward polar residues; it reads ITGQAENSQLDTESPLDSKSSRETTPTVTKVD. Positions 85 to 95 are enriched in basic and acidic residues; the sequence is KVEKSQKKKEQ. The helical transmembrane segment at 167–187 threads the bilayer; that stretch reads LKVWSIIFKWCFFLIPYLFAL. At 188–205 the chain is on the lumenal side; it reads TRSEPISFLPEQFSNPSN. A helical membrane pass occupies residues 206–225; the sequence is FFMIFLSFEIVATSIYFQKL. The Cytoplasmic segment spans residues 226-272; sequence QNIEKSNKINGFQSNNKIVNLVSLIPEGVLPVPDIKGKVIMALQYWD. A helical membrane pass occupies residues 273–293; sequence VFSMFLTDICFVLVMMGLFKL. A topological domain (lumenal) is located at residue I294.

This sequence belongs to the GET2 family. Component of the Golgi to ER traffic (GET) complex, which is composed of GET1, GET2 and GET3. Within the complex, GET1 and GET2 form a heterotetramer which is stabilized by phosphatidylinositol binding and which binds to the GET3 homodimer.

It localises to the endoplasmic reticulum membrane. Its subcellular location is the golgi apparatus membrane. Required for the post-translational delivery of tail-anchored (TA) proteins to the endoplasmic reticulum. Together with GET1, acts as a membrane receptor for soluble GET3, which recognizes and selectively binds the transmembrane domain of TA proteins in the cytosol. The GET complex cooperates with the HDEL receptor ERD2 to mediate the ATP-dependent retrieval of resident ER proteins that contain a C-terminal H-D-E-L retention signal from the Golgi to the ER. This Vanderwaltozyma polyspora (strain ATCC 22028 / DSM 70294 / BCRC 21397 / CBS 2163 / NBRC 10782 / NRRL Y-8283 / UCD 57-17) (Kluyveromyces polysporus) protein is Golgi to ER traffic protein 2.